Consider the following 1400-residue polypeptide: DNA-directed RNA polymerase subunit beta' (1400 aa).

Zn(2+) is bound by residues Cys70, Cys72, Cys85, and Cys88. Residues Asp460, Asp462, and Asp464 each coordinate Mg(2+). Cys814, Cys889, Cys896, and Cys899 together coordinate Zn(2+).

The protein belongs to the RNA polymerase beta' chain family. The RNAP catalytic core consists of 2 alpha, 1 beta, 1 beta' and 1 omega subunit. When a sigma factor is associated with the core the holoenzyme is formed, which can initiate transcription. It depends on Mg(2+) as a cofactor. Zn(2+) serves as cofactor.

The catalysed reaction is RNA(n) + a ribonucleoside 5'-triphosphate = RNA(n+1) + diphosphate. Functionally, DNA-dependent RNA polymerase catalyzes the transcription of DNA into RNA using the four ribonucleoside triphosphates as substrates. The protein is DNA-directed RNA polymerase subunit beta' of Alcanivorax borkumensis (strain ATCC 700651 / DSM 11573 / NCIMB 13689 / SK2).